The primary structure comprises 49 residues: Large ribosomal subunit protein bL33 (49 aa).

The protein belongs to the bacterial ribosomal protein bL33 family.

This Finegoldia magna (strain ATCC 29328 / DSM 20472 / WAL 2508) (Peptostreptococcus magnus) protein is Large ribosomal subunit protein bL33.